A 351-amino-acid chain; its full sequence is Prostaglandin reductase 2 (351 aa).

99–100 (FY) contacts substrate. NADP(+) is bound by residues 165-168 (GACG), Lys-192, Tyr-208, Asn-231, 253-259 (CGQISQY), 287-289 (FLV), and Asn-337. 288-290 (LVL) is a binding site for substrate.

The protein belongs to the NADP-dependent oxidoreductase L4BD family. As to quaternary structure, monomer. Widely expressed.

It is found in the cytoplasm. The catalysed reaction is 13,14-dihydro-15-oxo-prostaglandin E2 + NAD(+) = 15-oxoprostaglandin E2 + NADH + H(+). It carries out the reaction 13,14-dihydro-15-oxo-prostaglandin E2 + NADP(+) = 15-oxoprostaglandin E2 + NADPH + H(+). It catalyses the reaction 13,14-dihydro-15-oxo-PGF2alpha + NADP(+) = 15-oxoprostaglandin F2alpha + NADPH + H(+). The enzyme catalyses 13,14-dihydro-15-oxo-prostaglandin E1 + NADP(+) = 15-oxoprostaglandin E1 + NADPH + H(+). The catalysed reaction is 13,14-dihydro-15-oxo-prostaglandin F1alpha + NADP(+) = 15-oxoprostaglandin F1alpha + NADPH + H(+). Its function is as follows. Functions as 15-oxo-prostaglandin 13-reductase and acts on 15-keto-PGE1, 15-keto-PGE2, 15-keto-PGE1-alpha and 15-keto-PGE2-alpha with highest activity towards 15-keto-PGE2. Overexpression represses transcriptional activity of PPARG and inhibits adipocyte differentiation. The sequence is that of Prostaglandin reductase 2 from Homo sapiens (Human).